Reading from the N-terminus, the 932-residue chain is Potassium voltage-gated channel subfamily KQT member 5 (932 aa).

Topologically, residues 1–125 (MPRHHAGGEE…YNVLERPRGW (125 aa)) are cytoplasmic. S88 carries the phosphoserine modification. A helical membrane pass occupies residues 126 to 146 (AFIYHAFVFLLVFGCLILSVF). Residues 147–156 (STIPEHTKLA) lie on the Extracellular side of the membrane. A helical transmembrane segment spans residues 157–177 (SSCLLILEFVMIVVFGLEFII). Topologically, residues 178-200 (RIWSAGCCCRYRGWQGRLRFARK) are cytoplasmic. Residues 201 to 221 (PFCVIDTIVLIASIAVVSAKT) form a helical membrane-spanning segment. The Extracellular portion of the chain corresponds to 222-229 (QGNIFATS). The chain crosses the membrane as a helical; Voltage-sensor span at residues 230-252 (ALRSLRFLQILRMVRMDRRGGTW). Positions 248 and 264 each coordinate a 1,2-diacyl-sn-glycero-3-phospho-(1D-myo-inositol-4,5-bisphosphate). At 253–266 (KLLGSVVYAHSKEL) the chain is on the cytoplasmic side. The helical transmembrane segment at 267-287 (ITAWYIGFLVLIFSSFLVYLV) threads the bilayer. Topologically, residues 288–298 (EKDANKEFSTY) are extracellular. The pore-forming intramembrane region spans 299-319 (ADALWWGTITLTTIGYGDKTP). Over 320 to 325 (LTWLGR) the chain is Extracellular. A helical transmembrane segment spans residues 326–346 (LLSAGFALLGISFFALPAGIL). At 347–932 (GSGFALKVQE…ALSLPHVKLK (586 aa)) the chain is on the cytoplasmic side. An a 1,2-diacyl-sn-glycero-3-phospho-(1D-myo-inositol-4,5-bisphosphate)-binding site is contributed by K361. Residues 370-378 (AANLIQCVW) are interaction with CALM. The interval 404–465 (SPTKKEQGEA…GSPTKVQKSW (62 aa)) is disordered. A compositionally biased stretch (polar residues) spans 431-440 (RGQSIKSRQA). S447 is modified (phosphoserine). Residues 521-528 (VIRAIRIM) are interaction with CALM. The segment at 655–678 (SDYQSPVDSKDLSGSAQNSGCLSR) is disordered. Residue S831 is modified to Phosphoserine. The span at 876 to 885 (VGPEETETDT) shows a compositional bias: acidic residues. The disordered stretch occupies residues 876–919 (VGPEETETDTFDAAPQPAREAAFASDSLRTGRSRSSQSICKAGE). A compositionally biased stretch (low complexity) spans 888-899 (AAPQPAREAAFA). Over residues 902–914 (SLRTGRSRSSQSI) the composition is skewed to polar residues.

This sequence belongs to the potassium channel family. KQT (TC 1.A.1.15) subfamily. Kv7.5/KCNQ5 sub-subfamily. Homotetramer; forms a functional homotetrameric channel resulting in the expression of a small M-current. Heterotetramer with KCNQ3; forms heterotetrameric M-channel responsible for the native M-current. Heterotetramer with KCNQ1; forms a functional voltage-gated potassium channel. Interacts (via C-terminus) with calmodulin/CALM1; forms a heterooctameric structure (with 4:4 KCNQ1:CALM stoichiometry); the interaction is calcium-independent, constitutive and participates in the channel function. Strongly expressed in brain and skeletal muscle. In brain, expressed in cerebral cortex, occipital pole, frontal lobe and temporal lobe. Lower levels in hippocampus and putamen. Low to undetectable levels in medulla, cerebellum and thalamus.

The protein resides in the cell membrane. The catalysed reaction is K(+)(in) = K(+)(out). Its activity is regulated as follows. Phosphatidylinositol-4,5-bisphosphate (PIP2) is essential to activate KCNQ5 channel by inducing the coupling of the voltage-sensing domain (VSD) and the pore-forming domain (PD). Calcium suppresses KCNQ5 channel current through calcium-bound CALM C-terminus. Therefore CALM acts as calcium sensor that controls channel activity. Activated by niflumic acid and the anticonvulsant retigabine. Inhibited by barium, linopirdine, XE991 and tetraethylammonium (as homomer). Insensitive to tetraethylammonium in KCNQ3-KCNQ5 heteromers. Its function is as follows. Pore-forming subunit of the voltage-gated potassium (Kv) channel broadly expressed in brain and involved in the regulation of neuronal excitability. Associates with KCNQ3/Kv7.3 pore-forming subunit to form a potassium channel which contributes to M-type current, a slowly activating and deactivating potassium conductance which plays a critical role in determining the subthreshold electrical excitability of neurons. Contributes, with other potassium channels, to the molecular diversity of a heterogeneous population of M-channels, varying in kinetic and pharmacological properties, which underlie this physiologically important current. Also forms a functional channel with KCNQ1/Kv7.1 subunit that may contribute to vasoconstriction and hypertension. Channel may be selectively permeable in vitro to other cations besides potassium, in decreasing order of affinity K(+) = Rb(+) &gt; Cs(+) &gt; Na(+). Similar to the native M-channel, KCNQ3-KCNQ5 potassium channel is suppressed by activation of the muscarinic acetylcholine receptor CHRM1. The chain is Potassium voltage-gated channel subfamily KQT member 5 from Homo sapiens (Human).